The sequence spans 1030 residues: Toll-like receptor 9 (1030 aa).

The N-terminal stretch at 1–24 (MGPRCTLHPLSLLVQVTALAAALA) is a signal peptide. Residues 25–816 (QGRLPAFLPC…LCLDETLSWN (792 aa)) lie on the Extracellular side of the membrane. Cys-34 and Cys-44 are oxidised to a cystine. 46 to 50 (WLFLK) lines the DNA pocket. 26 LRR repeats span residues 61 to 84 (RANVTSLSLLSNRIHHLHDSDFVH), 86 to 109 (SSLRTLNLKWNCPPAGLSPMHFPC), 121 to 146 (VPTLEELNLSYNSITTVPALPDSLVS), 149 to 165 (LSRTNILVLDPTHLTGL), 166 to 189 (HALRYLYMDGNCYYKNPCQGALEV), 197 to 220 (LGNLTHLSLKYNNLTEVPRSLPPS), 222 to 241 (ETLLLSYNHIVTLTPEDLAN), 242 to 267 (LTALRVLDVGGNCRRCDHARNPCREC), 282 to 305 (LSRLEGLVLKDSSLYNLDTRWFRG), 307 to 331 (DRLQVLDLSENFLYDCITKTTAFQG), 332 to 355 (LARLRSLNLSFNYHKKVSFAHLHL), 362 to 385 (LRSLKELDMHGIFFRSLSETTLQP), 389 to 412 (LPMLQTLRLQMNFINQAQLSIFGA), 414 to 439 (PGLLYVDLSDNRISGAARPVAITREV), 469 to 493 (CKAFSFTLDLSRNNLVTIQSEMFAR), 495 to 518 (SRLECLRLSHNSISQAVNGSQFVP), 519 to 542 (LTSLRVLDLSHNKLDLYHGRSFTE), 544 to 571 (PRLEALDLSYNSQPFTMQGVGHNLSFVA), 573 to 597 (LPALRYLSLAHNDIHSRVSQQLCSA), 599 to 621 (LCALDFSGNDLSRMWAEGDLYLR), 626 to 649 (LRSLVWLDLSQNHLHTLLPRALDN), 651 to 674 (PKSLKHLHLRDNNLAFFNWSSLTL), 675 to 698 (LPKLETLDLAGNQLKALSNGSLPS), 700 to 722 (TQLRRLDLSGNSIGFVNPGFFAL), 723 to 746 (AKQLEELNLSANALKTVEPSWFGS), and 748 to 771 (VGNLKVLDVSANPLHCACGATFVG). Asn-63 is a glycosylation site (N-linked (GlcNAc...) asparagine). Residues 71 to 76 (SNRIHH) and 94 to 108 (KWNCPPAGLSPMHFP) contribute to the DNA site. Cys-97 and Cys-109 are oxidised to a cystine. An N-linked (GlcNAc...) asparagine glycan is attached at Asn-128. Residues Tyr-131, Arg-151, and 178–180 (YYK) contribute to the DNA site. Cys-177 and Cys-183 are joined by a disulfide. Asn-199 is a glycosylation site (N-linked (GlcNAc...) asparagine). A DNA-binding site is contributed by Tyr-207. Asn-209 and Asn-241 each carry an N-linked (GlcNAc...) asparagine glycan. Disulfide bonds link Cys-254-Cys-267 and Cys-257-Cys-264. Residue Cys-257 is the site of S-palmitoyl cysteine attachment. Arg-261 lines the DNA pocket. Cys-264 carries S-palmitoyl cysteine lipidation. N-linked (GlcNAc...) asparagine glycosylation occurs at Asn-339. A disulfide bridge links Cys-469 with Cys-499. An N-linked (GlcNAc...) asparagine glycan is attached at Asn-512. An N-linked (GlcNAc...) asparagine glycan is attached at Asn-566. Residues Asn-668 and Asn-693 are each glycosylated (N-linked (GlcNAc...) asparagine). Asn-730 carries an N-linked (GlcNAc...) asparagine glycan. 2 disulfide bridges follow: Cys-763-Cys-789 and Cys-765-Cys-808. The chain crosses the membrane as a helical span at residues 817–837 (CFGISLLAMALGLVVPMLHHL). Residues 838–1030 (CGWDLWYCFH…NFCRGPTTAE (193 aa)) are Cytoplasmic-facing. Residues 865-1010 (LFYDAFVVFD…SFWAQLGTAL (146 aa)) form the TIR domain.

This sequence belongs to the Toll-like receptor family. In terms of assembly, monomer and homodimer. Exists as a monomer in the absence of unmethylated cytidine-phosphate-guanosine (CpG) ligand. Proteolytic processing of an insertion loop (Z-loop) is required for homodimerization upon binding to the unmethylated CpG ligand leading to its activation. Interacts with MYD88 via their respective TIR domains. Interacts with BTK. Interacts (via transmembrane domain) with UNC93B1. Interacts with CD300LH; the interaction may promote full activation of TLR9-triggered innate responses. Interacts with CNPY3 and HSP90B1; this interaction is required for proper folding in the endoplasmic reticulum. Interacts with SMPDL3B. Interacts with CD82; this interaction is essential for TLR9-dependent myddosome formation in response to CpG stimulation. In terms of processing, activated by proteolytic cleavage of the flexible loop between repeats LRR14 and LRR15 within the ectodomain. Cleavage requires UNC93B1. Proteolytically processed by first removing the majority of the ectodomain by either asparagine endopeptidase (AEP) or a cathepsin followed by a trimming event that is solely cathepsin mediated and required for optimal receptor signaling. Palmitoylated by ZDHHC3 in the Golgi regulates TLR9 trafficking from the Golgi to endosomes. Depalmitoylation by PPT1 controls the release of TLR9 from UNC93B1 in endosomes.

It localises to the endoplasmic reticulum membrane. It is found in the endosome. The protein localises to the lysosome. The protein resides in the cytoplasmic vesicle. Its subcellular location is the phagosome. Functionally, key component of innate and adaptive immunity. TLRs (Toll-like receptors) control host immune response against pathogens through recognition of molecular patterns specific to microorganisms. TLR9 is a nucleotide-sensing TLR which is activated by unmethylated cytidine-phosphate-guanosine (CpG) dinucleotides. Acts via MYD88 and TRAF6, leading to NF-kappa-B activation, cytokine secretion and the inflammatory response. Upon CpG stimulation, induces B-cell proliferation, activation, survival and antibody production. This Sus scrofa (Pig) protein is Toll-like receptor 9 (TLR9).